A 363-amino-acid polypeptide reads, in one-letter code: Protein RecA (363 aa).

G77 to T84 contributes to the ATP binding site.

Belongs to the RecA family.

It is found in the cytoplasm. In terms of biological role, can catalyze the hydrolysis of ATP in the presence of single-stranded DNA, the ATP-dependent uptake of single-stranded DNA by duplex DNA, and the ATP-dependent hybridization of homologous single-stranded DNAs. It interacts with LexA causing its activation and leading to its autocatalytic cleavage. The sequence is that of Protein RecA from Agrobacterium fabrum (strain C58 / ATCC 33970) (Agrobacterium tumefaciens (strain C58)).